The primary structure comprises 603 residues: Threonine--tRNA ligase (603 aa).

A catalytic region spans residues 197–499 (DHRKLGKELG…LIEEYAGDFP (303 aa)). C296, H347, and H476 together coordinate Zn(2+).

This sequence belongs to the class-II aminoacyl-tRNA synthetase family. As to quaternary structure, homodimer. Zn(2+) is required as a cofactor.

Its subcellular location is the cytoplasm. It carries out the reaction tRNA(Thr) + L-threonine + ATP = L-threonyl-tRNA(Thr) + AMP + diphosphate + H(+). Catalyzes the attachment of threonine to tRNA(Thr) in a two-step reaction: L-threonine is first activated by ATP to form Thr-AMP and then transferred to the acceptor end of tRNA(Thr). Also edits incorrectly charged L-seryl-tRNA(Thr). This is Threonine--tRNA ligase from Synechocystis sp. (strain ATCC 27184 / PCC 6803 / Kazusa).